We begin with the raw amino-acid sequence, 133 residues long: Small ribosomal subunit protein uS12 (133 aa).

Position 89 is a 3-methylthioaspartic acid (aspartate 89). Positions aspartate 103–lysine 133 are disordered. A compositionally biased stretch (basic residues) spans threonine 111–lysine 123. The segment covering proline 124–lysine 133 has biased composition (low complexity).

This sequence belongs to the universal ribosomal protein uS12 family. As to quaternary structure, part of the 30S ribosomal subunit. Contacts proteins S8 and S17. May interact with IF1 in the 30S initiation complex.

In terms of biological role, with S4 and S5 plays an important role in translational accuracy. Interacts with and stabilizes bases of the 16S rRNA that are involved in tRNA selection in the A site and with the mRNA backbone. Located at the interface of the 30S and 50S subunits, it traverses the body of the 30S subunit contacting proteins on the other side and probably holding the rRNA structure together. The combined cluster of proteins S8, S12 and S17 appears to hold together the shoulder and platform of the 30S subunit. The sequence is that of Small ribosomal subunit protein uS12 from Bacteroides thetaiotaomicron (strain ATCC 29148 / DSM 2079 / JCM 5827 / CCUG 10774 / NCTC 10582 / VPI-5482 / E50).